We begin with the raw amino-acid sequence, 293 residues long: MDSIDTKRLNDSNASDRALSGCAVLFLGCSSLEHNFLSLYKDERGKFSVFKVIKLTLSDSVGGLEGYEILKLHDADPYLGVELKFMAMPPCQRFLESYACGSLTQFLSQHASRLLALPDGVEIETQLKAGVHTLDHSLQDIEICLDHIRQSQPVRLRDDEVTQLEQQLQNSYGPPSQPPQELPRNCFLFQKRVFDDRPLTPADQQRFAAHVGRDWKRVGRALQKNCRALKGPAIDNLAYEYEREGLYEQAYQLLGRFIQSEGRSAKLSRLISALEETKMTSMAEIMLGIQPRD.

The Nuclear export signal motif lies at 156–171 (LRDDEVTQLEQQLQNS). Residues 200-290 (TPADQQRFAA…SMAEIMLGIQ (91 aa)) enclose the Death domain. The short motif at 216–229 (KRVGRALQKNCRAL) is the Nuclear localization signal element.

As to quaternary structure, heterodimer with tnfrsf1a.

The protein localises to the nucleus. Its subcellular location is the cytoplasm. It is found in the cytoskeleton. Its function is as follows. Adapter molecule for tnfrsf1a that specifically associates with the cytoplasmic domain of activated tnfrsf1a mediating its interaction with fadd. In Danio rerio (Zebrafish), this protein is Tumor necrosis factor receptor type 1-associated DEATH domain protein.